A 359-amino-acid polypeptide reads, in one-letter code: Cytoplasmic tRNA 2-thiolation protein 1 (359 aa).

It belongs to the TtcA family. CTU1/NCS6/ATPBD3 subfamily. In terms of assembly, interacts with NCS2 and URM1. May act by forming a heterodimer with NCS2. Component of a large molecular weight complex of more than 250 kDa.

It localises to the cytoplasm. It is found in the mitochondrion. It functions in the pathway tRNA modification; 5-methoxycarbonylmethyl-2-thiouridine-tRNA biosynthesis. Functionally, plays a central role in 2-thiolation of mcm(5)S(2)U at tRNA wobble positions of tRNA(Lys), tRNA(Glu) and tRNA(Gln). Directly binds tRNAs and probably acts by catalyzing adenylation of tRNAs, an intermediate required for 2-thiolation. It is unclear whether it acts as a sulfurtransferase that transfers sulfur from thiocarboxylated URM1 onto the uridine of tRNAs at wobble position. Prior mcm(5) tRNA modification by the elongator complex is required for 2-thiolation. May also be involved in protein urmylation. This Saccharomyces cerevisiae (strain RM11-1a) (Baker's yeast) protein is Cytoplasmic tRNA 2-thiolation protein 1.